The chain runs to 392 residues: Stilbene synthase 1 (392 aa).

55-58 contributes to the substrate binding site; it reads KFNR. The active site involves Cys164. Substrate-binding positions include Leu267 and 305 to 307; that span reads GGP.

The protein belongs to the thiolase-like superfamily. Chalcone/stilbene synthases family. Homodimer. In leaves, expressed in palisade and spongy parenchyma cells and, to a lesser extent, in epidermal cells after induction.

It localises to the cytoplasm. It carries out the reaction 4-coumaroyl-CoA + 3 malonyl-CoA + 3 H(+) = trans-resveratrol + 4 CO2 + 4 CoA. The protein operates within phytoalexin biosynthesis; 3,4',5-trihydroxystilbene biosynthesis; 3,4',5-trihydroxystilbene from trans-4-coumarate: step 2/2. Mediates resistance to pathogens which are sensitive to stilbenes such as Botrytis cinerea, Eutypa lata and Plasmopora viticola by enhancing the production of phytoalexins. Confers resistance to Phytophthora palmivora when expressed in papaya. This chain is Stilbene synthase 1 (VINST1), found in Vitis vinifera (Grape).